Here is a 503-residue protein sequence, read N- to C-terminus: Probable cytosol aminopeptidase (503 aa).

Positions 274 and 279 each coordinate Mn(2+). The active site involves Lys286. Asp297, Asp356, and Glu358 together coordinate Mn(2+). Residue Arg360 is part of the active site.

Belongs to the peptidase M17 family. Mn(2+) serves as cofactor.

Its subcellular location is the cytoplasm. It catalyses the reaction Release of an N-terminal amino acid, Xaa-|-Yaa-, in which Xaa is preferably Leu, but may be other amino acids including Pro although not Arg or Lys, and Yaa may be Pro. Amino acid amides and methyl esters are also readily hydrolyzed, but rates on arylamides are exceedingly low.. The catalysed reaction is Release of an N-terminal amino acid, preferentially leucine, but not glutamic or aspartic acids.. Functionally, presumably involved in the processing and regular turnover of intracellular proteins. Catalyzes the removal of unsubstituted N-terminal amino acids from various peptides. This chain is Probable cytosol aminopeptidase, found in Burkholderia mallei (strain SAVP1).